The primary structure comprises 364 residues: Phosphoserine aminotransferase (364 aa).

An L-glutamate-binding site is contributed by Arg41. Residues 75 to 76, Trp100, Thr155, Asp175, and Gln198 contribute to the pyridoxal 5'-phosphate site; that span reads AS. Lys199 is subject to N6-(pyridoxal phosphate)lysine. 239–240 is a pyridoxal 5'-phosphate binding site; sequence NT.

It belongs to the class-V pyridoxal-phosphate-dependent aminotransferase family. SerC subfamily. In terms of assembly, homodimer. The cofactor is pyridoxal 5'-phosphate.

Its subcellular location is the cytoplasm. It catalyses the reaction O-phospho-L-serine + 2-oxoglutarate = 3-phosphooxypyruvate + L-glutamate. It carries out the reaction 4-(phosphooxy)-L-threonine + 2-oxoglutarate = (R)-3-hydroxy-2-oxo-4-phosphooxybutanoate + L-glutamate. The protein operates within amino-acid biosynthesis; L-serine biosynthesis; L-serine from 3-phospho-D-glycerate: step 2/3. Catalyzes the reversible conversion of 3-phosphohydroxypyruvate to phosphoserine and of 3-hydroxy-2-oxo-4-phosphonooxybutanoate to phosphohydroxythreonine. The chain is Phosphoserine aminotransferase from Streptococcus uberis (strain ATCC BAA-854 / 0140J).